The following is a 332-amino-acid chain: Twinfilin-1 (332 aa).

Positions 5 to 132 (SGIVAEQALL…VDLKNFDSAR (128 aa)) constitute an ADF-H 1 domain. S167 and S172 each carry phosphoserine. One can recognise an ADF-H 2 domain in the interval 173-300 (PLSLTFRVNS…DKSLLMATNK (128 aa)). The disordered stretch occupies residues 301 to 332 (EDSLDHGSNPDLPNKSNLKFNKPKGPLRKRRT). A compositionally biased stretch (basic residues) spans 321-332 (NKPKGPLRKRRT).

The protein belongs to the actin-binding proteins ADF family. Twinfilin subfamily. As to quaternary structure, interacts with G-actin; ADP-actin form.

It is found in the cytoplasm. The protein resides in the cytoskeleton. Actin-binding protein involved in motile and morphological processes. Inhibits actin polymerization, likely by sequestering G-actin. Prevents actin filament assembly by forming a 1:1 complex with actin monomers, and inhibits the nucleotide exchange reaction of actin monomers. The sequence is that of Twinfilin-1 (TWF1) from Saccharomyces cerevisiae (strain ATCC 204508 / S288c) (Baker's yeast).